The chain runs to 372 residues: ATP phosphoribosyltransferase regulatory subunit (372 aa).

The protein belongs to the class-II aminoacyl-tRNA synthetase family. HisZ subfamily. Heteromultimer composed of HisG and HisZ subunits.

It localises to the cytoplasm. The protein operates within amino-acid biosynthesis; L-histidine biosynthesis; L-histidine from 5-phospho-alpha-D-ribose 1-diphosphate: step 1/9. Its function is as follows. Required for the first step of histidine biosynthesis. May allow the feedback regulation of ATP phosphoribosyltransferase activity by histidine. This is ATP phosphoribosyltransferase regulatory subunit from Rhizobium rhizogenes (strain K84 / ATCC BAA-868) (Agrobacterium radiobacter).